We begin with the raw amino-acid sequence, 440 residues long: Chromosome partition protein MukF (440 aa).

A leucine-zipper region spans residues 208–236 (LSETSGTLRELQDTLEAAGDKLQANLLRI).

This sequence belongs to the MukF family. In terms of assembly, interacts, and probably forms a ternary complex, with MukE and MukB via its C-terminal region. The complex formation is stimulated by calcium or magnesium. It is required for an interaction between MukE and MukB.

Its subcellular location is the cytoplasm. It localises to the nucleoid. Its function is as follows. Involved in chromosome condensation, segregation and cell cycle progression. May participate in facilitating chromosome segregation by condensation DNA from both sides of a centrally located replisome during cell division. Not required for mini-F plasmid partitioning. Probably acts via its interaction with MukB and MukE. Overexpression results in anucleate cells. It has a calcium binding activity. The sequence is that of Chromosome partition protein MukF from Photorhabdus laumondii subsp. laumondii (strain DSM 15139 / CIP 105565 / TT01) (Photorhabdus luminescens subsp. laumondii).